Consider the following 288-residue polypeptide: Fructose-bisphosphate aldolase (288 aa).

Ser-49 contributes to the D-glyceraldehyde 3-phosphate binding site. Asp-84 (proton donor) is an active-site residue. Residues His-85, Asp-105, Glu-135, and His-177 each contribute to the Zn(2+) site. Gly-178 lines the dihydroxyacetone phosphate pocket. Zn(2+) is bound at residue His-206. Dihydroxyacetone phosphate is bound by residues 207–209 and 228–231; these read GGS and NINT.

This sequence belongs to the class II fructose-bisphosphate aldolase family. In terms of assembly, homodimer. Requires Zn(2+) as cofactor.

It carries out the reaction beta-D-fructose 1,6-bisphosphate = D-glyceraldehyde 3-phosphate + dihydroxyacetone phosphate. Its pathway is carbohydrate degradation; glycolysis; D-glyceraldehyde 3-phosphate and glycerone phosphate from D-glucose: step 4/4. Catalyzes the aldol condensation of dihydroxyacetone phosphate (DHAP or glycerone-phosphate) with glyceraldehyde 3-phosphate (G3P) to form fructose 1,6-bisphosphate (FBP) in gluconeogenesis and the reverse reaction in glycolysis. The protein is Fructose-bisphosphate aldolase (fba) of Mycoplasma pneumoniae (strain ATCC 29342 / M129 / Subtype 1) (Mycoplasmoides pneumoniae).